A 290-amino-acid polypeptide reads, in one-letter code: Acetylglutamate kinase (290 aa).

Substrate contacts are provided by residues 64 to 65 (GG), Arg86, and Asn183.

It belongs to the acetylglutamate kinase family. ArgB subfamily.

Its subcellular location is the cytoplasm. It carries out the reaction N-acetyl-L-glutamate + ATP = N-acetyl-L-glutamyl 5-phosphate + ADP. It participates in amino-acid biosynthesis; L-arginine biosynthesis; N(2)-acetyl-L-ornithine from L-glutamate: step 2/4. Its function is as follows. Catalyzes the ATP-dependent phosphorylation of N-acetyl-L-glutamate. This Halothermothrix orenii (strain H 168 / OCM 544 / DSM 9562) protein is Acetylglutamate kinase.